A 443-amino-acid chain; its full sequence is F-box only protein 39 (443 aa).

Positions 13-59 constitute an F-box domain; sequence QSCWATLPDVCLRRVFWWLGDRDRSRAALVCRKWNQIMYSADLWRYR.

As to quaternary structure, directly interacts with SKP1 and CUL1.

In terms of biological role, substrate-recognition component of the SCF (SKP1-CUL1-F-box protein)-type E3 ubiquitin ligase complex. The polypeptide is F-box only protein 39 (Fbxo39) (Rattus norvegicus (Rat)).